The following is a 329-amino-acid chain: GTP 3',8-cyclase (329 aa).

The Radical SAM core domain occupies 8-234 (AFARKFYYLR…QLRQRSDGPA (227 aa)). A GTP-binding site is contributed by Arg-17. Residues Cys-24 and Cys-28 each coordinate [4Fe-4S] cluster. Tyr-30 contributes to the S-adenosyl-L-methionine binding site. Cys-31 contacts [4Fe-4S] cluster. Arg-68 contributes to the GTP binding site. Gly-72 serves as a coordination point for S-adenosyl-L-methionine. Thr-99 contributes to the GTP binding site. Ser-123 contributes to the S-adenosyl-L-methionine binding site. Position 160 (Lys-160) interacts with GTP. Met-194 provides a ligand contact to S-adenosyl-L-methionine. 2 residues coordinate [4Fe-4S] cluster: Cys-257 and Cys-260. 262–264 (RLR) serves as a coordination point for GTP. Cys-274 lines the [4Fe-4S] cluster pocket.

This sequence belongs to the radical SAM superfamily. MoaA family. As to quaternary structure, monomer and homodimer. The cofactor is [4Fe-4S] cluster.

The catalysed reaction is GTP + AH2 + S-adenosyl-L-methionine = (8S)-3',8-cyclo-7,8-dihydroguanosine 5'-triphosphate + 5'-deoxyadenosine + L-methionine + A + H(+). It participates in cofactor biosynthesis; molybdopterin biosynthesis. Its function is as follows. Catalyzes the cyclization of GTP to (8S)-3',8-cyclo-7,8-dihydroguanosine 5'-triphosphate. This is GTP 3',8-cyclase from Escherichia coli O139:H28 (strain E24377A / ETEC).